The following is a 105-amino-acid chain: uncharacterized protein (105 aa).

The helical transmembrane segment at 29-49 threads the bilayer; sequence NAFLLILSEAYLLFVFLSYLI.

The protein localises to the membrane. This is an uncharacterized protein from Saccharomyces cerevisiae (strain ATCC 204508 / S288c) (Baker's yeast).